A 277-amino-acid chain; its full sequence is Ribosomal RNA small subunit methyltransferase A (277 aa).

Residues Asn27, Leu29, Gly54, Glu75, Asp95, and Asn118 each contribute to the S-adenosyl-L-methionine site.

The protein belongs to the class I-like SAM-binding methyltransferase superfamily. rRNA adenine N(6)-methyltransferase family. RsmA subfamily.

It localises to the cytoplasm. It catalyses the reaction adenosine(1518)/adenosine(1519) in 16S rRNA + 4 S-adenosyl-L-methionine = N(6)-dimethyladenosine(1518)/N(6)-dimethyladenosine(1519) in 16S rRNA + 4 S-adenosyl-L-homocysteine + 4 H(+). In terms of biological role, specifically dimethylates two adjacent adenosines (A1518 and A1519) in the loop of a conserved hairpin near the 3'-end of 16S rRNA in the 30S particle. May play a critical role in biogenesis of 30S subunits. This chain is Ribosomal RNA small subunit methyltransferase A, found in Chlamydia trachomatis serovar L2 (strain ATCC VR-902B / DSM 19102 / 434/Bu).